A 523-amino-acid chain; its full sequence is NAD(P)H-quinone oxidoreductase subunit 2 (523 aa).

The next 13 helical transmembrane spans lie at 29–49, 57–77, 94–114, 128–148, 182–202, 223–243, 255–275, 291–311, 317–337, 345–365, 389–409, 424–444, and 477–497; these read AVAP…VDLA, WVPP…ALQW, LAIA…MISW, AGIL…TDLV, LLVG…LYGL, AALA…AVPF, PTPV…ALAL, LLFT…ALAQ, MLAY…VCGT, VLYT…IILF, LGLS…GFFG, VLVV…IGVI, and VALV…NPLF.

It belongs to the complex I subunit 2 family. In terms of assembly, NDH-1 can be composed of about 15 different subunits; different subcomplexes with different compositions have been identified which probably have different functions.

Its subcellular location is the cellular thylakoid membrane. It carries out the reaction a plastoquinone + NADH + (n+1) H(+)(in) = a plastoquinol + NAD(+) + n H(+)(out). It catalyses the reaction a plastoquinone + NADPH + (n+1) H(+)(in) = a plastoquinol + NADP(+) + n H(+)(out). Functionally, NDH-1 shuttles electrons from an unknown electron donor, via FMN and iron-sulfur (Fe-S) centers, to quinones in the respiratory and/or the photosynthetic chain. The immediate electron acceptor for the enzyme in this species is believed to be plastoquinone. Couples the redox reaction to proton translocation, and thus conserves the redox energy in a proton gradient. Cyanobacterial NDH-1 also plays a role in inorganic carbon-concentration. The protein is NAD(P)H-quinone oxidoreductase subunit 2 of Synechococcus sp. (strain WH7803).